The primary structure comprises 119 residues: Large ribosomal subunit protein uL18 (119 aa).

It belongs to the universal ribosomal protein uL18 family. In terms of assembly, part of the 50S ribosomal subunit; part of the 5S rRNA/L5/L18/L25 subcomplex. Contacts the 5S and 23S rRNAs.

Its function is as follows. This is one of the proteins that bind and probably mediate the attachment of the 5S RNA into the large ribosomal subunit, where it forms part of the central protuberance. The chain is Large ribosomal subunit protein uL18 from Nitratidesulfovibrio vulgaris (strain DP4) (Desulfovibrio vulgaris).